The chain runs to 860 residues: Leucine--tRNA ligase (860 aa).

Residues Pro42–His52 carry the 'HIGH' region motif. Positions Lys619 to Ser623 match the 'KMSKS' region motif. Lys622 serves as a coordination point for ATP.

Belongs to the class-I aminoacyl-tRNA synthetase family.

The protein localises to the cytoplasm. The enzyme catalyses tRNA(Leu) + L-leucine + ATP = L-leucyl-tRNA(Leu) + AMP + diphosphate. In Mannheimia succiniciproducens (strain KCTC 0769BP / MBEL55E), this protein is Leucine--tRNA ligase.